We begin with the raw amino-acid sequence, 262 residues long: Small ribosomal subunit protein uS2 (262 aa).

The tract at residues 228-262 (VSNEEVAAEQNIDLDESKEATEAETTEENTSVESN) is disordered.

Belongs to the universal ribosomal protein uS2 family.

In Staphylococcus saprophyticus subsp. saprophyticus (strain ATCC 15305 / DSM 20229 / NCIMB 8711 / NCTC 7292 / S-41), this protein is Small ribosomal subunit protein uS2.